The sequence spans 463 residues: UDP-N-acetylmuramoylalanine--D-glutamate ligase (463 aa).

116 to 122 lines the ATP pocket; it reads GTNGKTT.

This sequence belongs to the MurCDEF family.

Its subcellular location is the cytoplasm. It carries out the reaction UDP-N-acetyl-alpha-D-muramoyl-L-alanine + D-glutamate + ATP = UDP-N-acetyl-alpha-D-muramoyl-L-alanyl-D-glutamate + ADP + phosphate + H(+). It participates in cell wall biogenesis; peptidoglycan biosynthesis. Functionally, cell wall formation. Catalyzes the addition of glutamate to the nucleotide precursor UDP-N-acetylmuramoyl-L-alanine (UMA). This chain is UDP-N-acetylmuramoylalanine--D-glutamate ligase, found in Synechococcus elongatus (strain ATCC 33912 / PCC 7942 / FACHB-805) (Anacystis nidulans R2).